A 499-amino-acid polypeptide reads, in one-letter code: Protein phosphatase PP2A 55 kDa regulatory subunit (499 aa).

Residues 1–30 are disordered; sequence MGRWGRQSPVLEPPDPQMQTTPPPPTLPPR. The segment covering 11 to 28 has biased composition (pro residues); that stretch reads LEPPDPQMQTTPPPPTLP. WD repeat units lie at residues 79–118, 144–185, 228–266, 277–317, 336–374, 391–432, and 467–498; these read TDAD…KAAN, EIEE…KSFG, AHTY…QSYN, ELTE…LCDR, EIIS…KPIE, ENDC…DVTL, and DFNK…FQDK.

It belongs to the phosphatase 2A regulatory subunit B family. In terms of assembly, PP2A exists in several trimeric forms, all of which consist of a core composed of a catalytic subunit associated with a 65 kDa regulatory subunit (PR65) (subunit A). The core complex associates with a third, variable subunit (subunit B), which confers distinct properties to the holoenzyme.

Its function is as follows. Could perform a substrate recognition function or could be responsible for targeting the enzyme complex to the appropriate subcellular compartment. The chain is Protein phosphatase PP2A 55 kDa regulatory subunit (tws) from Drosophila melanogaster (Fruit fly).